The chain runs to 148 residues: NTR domain-containing protein (148 aa).

Positions Met1–Ala26 are cleaved as a signal peptide. Cystine bridges form between Cys27/Cys96, Cys29/Cys122, and Cys40/Cys146. The 120-residue stretch at Cys27–Cys146 folds into the NTR domain.

As to expression, prismatic layer of shell (at protein level). Expressed primarily in the mantle with highest level in the mantle edge and lower level in the mantle pallium.

The protein resides in the secreted. In Margaritifera margaritifera (Freshwater pearl mussel), this protein is NTR domain-containing protein.